Here is a 266-residue protein sequence, read N- to C-terminus: Eukaryotic translation initiation factor 3 subunit J (266 aa).

Disordered regions lie at residues 1–111 and 217–266; these read MAPS…EKDA and NEKM…DDFM. Residues 26–44 show a composition bias toward acidic residues; sequence DEEEEDVLDSWDAAEDSEV. A coiled-coil region spans residues 40–82; sequence EDSEVEREKAAKAAEAKAKAEAEAAANKKSKAQRIQEKKAQRK. Basic and acidic residues-rich tracts occupy residues 45–61 and 73–85; these read EREK…KAEA and RIQE…KADA. The segment covering 86-97 has biased composition (acidic residues); sequence DAEDSDDSDEDE. Composition is skewed to basic and acidic residues over residues 98-111 and 218-230; these read AERR…EKDA and EKMK…DKGN. A compositionally biased stretch (acidic residues) spans 254-266; sequence SYDDDGLDDDDFM.

This sequence belongs to the eIF-3 subunit J family. Component of the eukaryotic translation initiation factor 3 (eIF-3) complex.

Its subcellular location is the cytoplasm. Functionally, component of the eukaryotic translation initiation factor 3 (eIF-3) complex, which is involved in protein synthesis of a specialized repertoire of mRNAs and, together with other initiation factors, stimulates binding of mRNA and methionyl-tRNAi to the 40S ribosome. The eIF-3 complex specifically targets and initiates translation of a subset of mRNAs involved in cell proliferation. This Aspergillus niger (strain ATCC MYA-4892 / CBS 513.88 / FGSC A1513) protein is Eukaryotic translation initiation factor 3 subunit J (hcr1).